The chain runs to 759 residues: NADP-dependent malic enzyme (759 aa).

Positions 1-428 are malic enzyme; that stretch reads MDEQLKQSAL…KLTEFVYKTN (428 aa). Residue Tyr39 is the Proton donor of the active site. Residue Lys94 is the Proton acceptor of the active site. Glu136, Asp137, and Asp162 together coordinate a divalent metal cation. NADP(+) is bound by residues 195–198, Asn288, and Asn320; that span reads AGAA. Positions 429–759 are phosphate acetyltransferase; the sequence is LFMKPIFSQA…AVVEAQTTPL (331 aa).

This sequence in the N-terminal section; belongs to the malic enzymes family. The protein in the C-terminal section; belongs to the phosphate acetyltransferase and butyryltransferase family. The cofactor is Mg(2+). Mn(2+) is required as a cofactor.

It catalyses the reaction (S)-malate + NADP(+) = pyruvate + CO2 + NADPH. It carries out the reaction oxaloacetate + H(+) = pyruvate + CO2. This is NADP-dependent malic enzyme (maeB) from Salmonella typhimurium (strain LT2 / SGSC1412 / ATCC 700720).